Reading from the N-terminus, the 429-residue chain is MPSRIPSSNDPVLPGRELWGTERFWHFAHHEHQGAFDMVSIFVVDVGSRHLSIEDWRKAWSKLYRTFAVLSQKISDDSGEGKIVDGALRAEESFFTGPILQDDQDRIDYSLQQRRFDCLSLTVFATSGTEHESFHLAISNPHALGDAKGIFAIGKALIQGVLSQTQAELQSPTSPPPQPSLKAFTTSHNQDLGLKAMFEVARTGSSIGFPILPKETSAELEPASREWRRVFTFSPAQTETLVQLCKAKALTVSAWLQATILHALIDTLVDDKGDEKAEQTFTVAAMPFHSPLSVSGATSTIFAPISIRVGSKAELNDIAEAVAESFGLARRFAEDVQDDYVKTLLKLFGSVRLETSVPTFSSLGRLDTVTGLKRYHVVARNNLPTTGIHAWTLNDQLNLTLSWAPARFRRDHIEKFWSTWIGTIKEVVA.

This sequence belongs to the alcohol acetyltransferase FCK4 family.

It functions in the pathway secondary metabolite biosynthesis. In terms of biological role, probable alcohol acetyltransferase; part of the gene cluster that mediates the biosynthesis of the glycolipid biosurfactant ustilagic acid (UA). UA is a secreted cellobiose glycolipid that is toxic for many microorganisms and confers biocontrol activity to U.maydis. UA consists of 15,16-dihydroxypalmitic or 2,15,16-trihydroxypalmitic acid, which is O-glycosidically linked to cellobiose at its terminal hydroxyl group. In addition, the cellobiose moiety is acetylated and acylated with a short-chain hydroxy fatty acid. UA biosynthesis starts with omega-hydroxylation of palmitic acid catalyzed by the cytochrome P450 monooxygenase cyp1. Terminal hydroxylation of palmitic acid precedes subterminal hydroxylation catalyzed by the cytochrome P450 monooxygenase cyp2. Sequential glucosylation of the hydroxy fatty acid is probably catalyzed by the glycosyltransferase ugt1. The cellobiose lipid is further decorated by acetylation of the proximal glucose residue and by acylation with a short-chain beta-hydroxy fatty acid at the distal glucose residue. The acyltransferase uat1 may be a good candidate for catalyzing either acetylation or acylation of the cellobiose lipid. The fatty acid synthase fas2 may be involved in synthesis of the carbon backbone of the short-chain beta-hydroxy fatty acid esterified to the cellobiose disaccharide. The secreted UA consists of a mixture of both alpha-hydroxylated and non-hydroxylated glycolipids; therefore, alpha-hydroxylation of the long-chain fatty, catalyzed by the fatty acid hydroxylase ahd1, occurs late in UA biosynthesis and may be the last step before secretion. The protein is Probable alcohol acetyltransferase orf1 of Mycosarcoma maydis (Corn smut fungus).